A 513-amino-acid chain; its full sequence is Na(+)/H(+) antiporter NhaB (513 aa).

Helical transmembrane passes span isoleucine 21–isoleucine 41, isoleucine 88–methionine 108, leucine 119–phenylalanine 139, phenylalanine 143–valine 163, valine 208–alanine 228, leucine 247–glycine 267, alanine 303–isoleucine 323, leucine 357–isoleucine 377, leucine 389–alanine 409, alanine 447–isoleucine 467, and methionine 477–leucine 497.

The protein belongs to the NhaB Na(+)/H(+) (TC 2.A.34) antiporter family.

Its subcellular location is the cell inner membrane. It catalyses the reaction 2 Na(+)(in) + 3 H(+)(out) = 2 Na(+)(out) + 3 H(+)(in). In terms of biological role, na(+)/H(+) antiporter that extrudes sodium in exchange for external protons. This chain is Na(+)/H(+) antiporter NhaB, found in Pasteurella multocida (strain Pm70).